Reading from the N-terminus, the 309-residue chain is Dicarboxylate carrier SLC25A8 (309 aa).

At 1-16 (MVGFKATDVPPTATVK) the chain is on the mitochondrial intermembrane side. Solcar repeat units lie at residues 11 to 106 (PTAT…VKQF), 114 to 203 (ASIG…IKDA), and 212 to 297 (DDLP…LKRA). The interval 16 to 63 (KFLGAGTAACIADLITFPLDTAKVRLQIQGESQGPVRATASAQYRGVM) is important for interaction with long-chain fatty acids. The helical transmembrane segment at 17-40 (FLGAGTAACIADLITFPLDTAKVR) threads the bilayer. Residues 41–77 (LQIQGESQGPVRATASAQYRGVMGTILTMVRTEGPRS) are Mitochondrial matrix-facing. Residues 78–103 (LYNGLVAGLQRQMSFASVRIGLYDSV) traverse the membrane as a helical segment. Residues 104–119 (KQFYTKGSEHASIGSR) are Mitochondrial intermembrane-facing. Residues 120 to 145 (LLAGSTTGALAVAVAQPTDVVKVRFQ) traverse the membrane as a helical segment. Topologically, residues 146 to 173 (AQARAGGGRRYQSTVNAYKTIAREEGFR) are mitochondrial matrix. The chain crosses the membrane as a helical span at residues 174–199 (GLWKGTSPNVARNAIVNCAELVTYDL). Over 200-217 (IKDALLKANLMTDDLPCH) the chain is Mitochondrial intermembrane. A helical transmembrane segment spans residues 218 to 242 (FTSAFGAGFCTTVIASPVDVVKTRY). Over 243–268 (MNSALGQYSSAGHCALTMLQKEGPRA) the chain is Mitochondrial matrix. Residues 269–294 (FYKGFMPSFLRLGSWNVVMFVTYEQL) form a helical membrane-spanning segment. An important for interaction with long-chain fatty acids region spans residues 278–285 (LRLGSWNV). The Mitochondrial intermembrane portion of the chain corresponds to 295–309 (KRALMAACTSREAPF).

This sequence belongs to the mitochondrial carrier (TC 2.A.29) family. In terms of assembly, homotetramer. Adopts an asymmetrical dimer of dimers functional form. In terms of tissue distribution, widely expressed in adult human tissues, including tissues rich in macrophages. Most expressed in white adipose tissue and skeletal muscle.

The protein localises to the mitochondrion inner membrane. The enzyme catalyses L-aspartate(out) + phosphate(in) + H(+)(in) = L-aspartate(in) + phosphate(out) + H(+)(out). The catalysed reaction is oxaloacetate(out) + phosphate(in) + H(+)(in) = oxaloacetate(in) + phosphate(out) + H(+)(out). It catalyses the reaction (S)-malate(out) + phosphate(in) + H(+)(in) = (S)-malate(in) + phosphate(out) + H(+)(out). It carries out the reaction malonate(out) + phosphate(in) + H(+)(in) = malonate(in) + phosphate(out) + H(+)(out). The enzyme catalyses sulfate(out) + phosphate(in) + H(+)(in) = sulfate(in) + phosphate(out) + H(+)(out). The catalysed reaction is (S)-malate(out) = (S)-malate(in). It catalyses the reaction L-aspartate(out) = L-aspartate(in). It carries out the reaction phosphate(in) = phosphate(out). The enzyme catalyses chloride(in) = chloride(out). The catalysed reaction is H(+)(in) = H(+)(out). It catalyses the reaction a long-chain fatty acid(out) = a long-chain fatty acid(in). With respect to regulation, inhibited by pyridoxal- 5'-phosphate, bathophenanthroline, tannic acid, bromocresol purple, butylmalonate and phenylsuccinate. Proton conductance is activated by cardiolipin and long-chain free fatty acids and inhibited by purine nucleotides ATP and ADP. Chloride ion transporter activity is inhibited by long-chain free fatty acids. In terms of biological role, antiporter that exports dicarboxylate intermediates of the Krebs cycle in exchange for phosphate plus a proton across the inner membrane of mitochondria, a process driven by mitochondrial motive force with an overall impact on glycolysis, glutaminolysis and glutathione-dependent redox balance. Continuous export of oxaloacetate and related four-carbon dicarboxylates from mitochondrial matrix into the cytosol negatively regulates the oxidation of acetyl-CoA substrates via the Krebs cycle, lowering the ATP/ADP ratio and reactive oxygen species (ROS) production. May mediate inducible proton entry into the mitochondrial matrix affecting ATP turnover as a protection mechanism against oxidative stress. The proton currents are most likely associated with fatty acid flipping across the inner membrane of mitochondria in a metabolic process regulated by free fatty acids and purine nucleotides. Regulates the use of glucose as a source of energy. Required for glucose-induced DRP1-dependent mitochondrial fission and neuron activation in the ventromedial nucleus of the hypothalamus (VMH). This mitochondrial adaptation mechanism modulates the VMH pool of glucose-excited neurons with an impact on systemic glucose homeostasis. Regulates ROS levels and metabolic reprogramming of macrophages during the resolution phase of inflammation. Attenuates ROS production in response to IL33 to preserve the integrity of the Krebs cycle required for persistent production of itaconate and subsequent GATA3-dependent differentiation of inflammation-resolving alternatively activated macrophages. Can unidirectionally transport anions including L-malate, L-aspartate, phosphate and chloride ions. Does not mediate adaptive thermogenesis. In Homo sapiens (Human), this protein is Dicarboxylate carrier SLC25A8 (UCP2).